We begin with the raw amino-acid sequence, 89 residues long: Small ribosomal subunit protein uS15 (89 aa).

Belongs to the universal ribosomal protein uS15 family. As to quaternary structure, part of the 30S ribosomal subunit. Forms a bridge to the 50S subunit in the 70S ribosome, contacting the 23S rRNA.

Functionally, one of the primary rRNA binding proteins, it binds directly to 16S rRNA where it helps nucleate assembly of the platform of the 30S subunit by binding and bridging several RNA helices of the 16S rRNA. In terms of biological role, forms an intersubunit bridge (bridge B4) with the 23S rRNA of the 50S subunit in the ribosome. The protein is Small ribosomal subunit protein uS15 of Thermodesulfovibrio yellowstonii (strain ATCC 51303 / DSM 11347 / YP87).